The primary structure comprises 357 residues: tRNA-specific 2-thiouridylase MnmA (357 aa).

Residues 3–10 (AMSGGVDS) and L29 each bind ATP. Catalysis depends on C98, which acts as the Nucleophile. A disulfide bridge links C98 with C196. G122 lines the ATP pocket. The segment at 146–148 (KDQ) is interaction with tRNA. C196 acts as the Cysteine persulfide intermediate in catalysis. The segment at 302–303 (RY) is interaction with tRNA.

It belongs to the MnmA/TRMU family.

The protein resides in the cytoplasm. The enzyme catalyses S-sulfanyl-L-cysteinyl-[protein] + uridine(34) in tRNA + AH2 + ATP = 2-thiouridine(34) in tRNA + L-cysteinyl-[protein] + A + AMP + diphosphate + H(+). Functionally, catalyzes the 2-thiolation of uridine at the wobble position (U34) of tRNA, leading to the formation of s(2)U34. The sequence is that of tRNA-specific 2-thiouridylase MnmA from Moorella thermoacetica (strain ATCC 39073 / JCM 9320).